The chain runs to 228 residues: Phosphoribosylformylglycinamidine synthase subunit PurQ (228 aa).

The 224-residue stretch at 3–226 (FAVIVFPGSN…IANWRDSYAI (224 aa)) folds into the Glutamine amidotransferase type-1 domain. The Nucleophile role is filled by Cys-87. Catalysis depends on residues His-195 and Glu-197.

As to quaternary structure, part of the FGAM synthase complex composed of 1 PurL, 1 PurQ and 2 PurS subunits.

Its subcellular location is the cytoplasm. The enzyme catalyses N(2)-formyl-N(1)-(5-phospho-beta-D-ribosyl)glycinamide + L-glutamine + ATP + H2O = 2-formamido-N(1)-(5-O-phospho-beta-D-ribosyl)acetamidine + L-glutamate + ADP + phosphate + H(+). It catalyses the reaction L-glutamine + H2O = L-glutamate + NH4(+). It functions in the pathway purine metabolism; IMP biosynthesis via de novo pathway; 5-amino-1-(5-phospho-D-ribosyl)imidazole from N(2)-formyl-N(1)-(5-phospho-D-ribosyl)glycinamide: step 1/2. Functionally, part of the phosphoribosylformylglycinamidine synthase complex involved in the purines biosynthetic pathway. Catalyzes the ATP-dependent conversion of formylglycinamide ribonucleotide (FGAR) and glutamine to yield formylglycinamidine ribonucleotide (FGAM) and glutamate. The FGAM synthase complex is composed of three subunits. PurQ produces an ammonia molecule by converting glutamine to glutamate. PurL transfers the ammonia molecule to FGAR to form FGAM in an ATP-dependent manner. PurS interacts with PurQ and PurL and is thought to assist in the transfer of the ammonia molecule from PurQ to PurL. This is Phosphoribosylformylglycinamidine synthase subunit PurQ from Oceanobacillus iheyensis (strain DSM 14371 / CIP 107618 / JCM 11309 / KCTC 3954 / HTE831).